The sequence spans 54 residues: Ovomucoid (54 aa).

Positions 4 to 54 (VDCSDYPKPVCTLEDMPLCGSDNITYHNKCYFCNAVAHSNGTLTFSHFGKC) constitute a Kazal-like domain. 3 disulfide bridges follow: cysteine 6/cysteine 36, cysteine 14/cysteine 33, and cysteine 22/cysteine 54. Asparagine 43 carries an N-linked (GlcNAc...) asparagine glycan.

The protein localises to the secreted. In Carpococcyx renauldi (Coral-billed ground-cuckoo), this protein is Ovomucoid.